The following is a 424-amino-acid chain: MTWKPIICLAALVLSASAIPVDNNVEGEPEVECGPNSITVNFNTRNPFEGHVYVKGLYDQAGCRSDEGGRQVAGIELPFDSCNTARTRSLNPKGVFVSTTVVISFHPQFVTKVDRAYRIQCFYMESDKTVSTQIEVSDLTTAFQTQVVPMPVCKYEILDGGPSGQPIQFATIGQQVYHKWTCDSETTDTFCAVVHSCTVDDGNGDTVQILNEEGCALDKFLLNNLEYPTDLMAGQEAHVYKYADRSQLFYQCQISITIKDPGSECARPTCSEPQGFGAVKQAGAGGAHAAAAPQAGVEEVQAAPVAAAAPVAAPVAAAAAAPAVPRATLAQLRLLRKKRSFGENEGILDVRVEINTLDIMEGASPSAPEAAALVSEESVRRRATSTGICLTPIGFASFLGIGTIVATALSATIFYVARPTSHKH.

Residues 1-18 (MTWKPIICLAALVLSASA) form the signal peptide. Over 19-392 (IPVDNNVEGE…ATSTGICLTP (374 aa)) the chain is Extracellular. The ZP domain occupies 32–277 (ECGPNSITVN…PTCSEPQGFG (246 aa)). An intrachain disulfide couples Cys197 to Cys252. 4 repeat units span residues 302 to 305 (AAPV), 307 to 311 (AAAPV), 312 to 315 (AAPV), and 320 to 323 (AAPA). The segment at 302 to 323 (AAPVAAAAPVAAPVAAAAAAPA) is 4 X 4 AA repeats of A-A-P-[AVI]. A helical membrane pass occupies residues 393-413 (IGFASFLGIGTIVATALSATI). The Cytoplasmic segment spans residues 414-424 (FYVARPTSHKH).

It is found in the cell membrane. It localises to the secreted. Functionally, component of the cuticles, which contributes to the formation of extracellular envelopes protecting the organism from the environment. Plays a role in alae formation in dauer larvae. The chain is Cuticlin-1 from Caenorhabditis elegans.